The primary structure comprises 37 residues: Large ribosomal subunit protein bL36c (37 aa).

Belongs to the bacterial ribosomal protein bL36 family.

It localises to the plastid. Its subcellular location is the chloroplast. In Mesembryanthemum crystallinum (Common ice plant), this protein is Large ribosomal subunit protein bL36c.